The following is a 242-amino-acid chain: Biosynthetic peptidoglycan transglycosylase (242 aa).

The helical transmembrane segment at 19 to 39 (ILAALAVFWGGGIALFSVVPV) threads the bilayer.

Belongs to the glycosyltransferase 51 family.

It is found in the cell inner membrane. The catalysed reaction is [GlcNAc-(1-&gt;4)-Mur2Ac(oyl-L-Ala-gamma-D-Glu-L-Lys-D-Ala-D-Ala)](n)-di-trans,octa-cis-undecaprenyl diphosphate + beta-D-GlcNAc-(1-&gt;4)-Mur2Ac(oyl-L-Ala-gamma-D-Glu-L-Lys-D-Ala-D-Ala)-di-trans,octa-cis-undecaprenyl diphosphate = [GlcNAc-(1-&gt;4)-Mur2Ac(oyl-L-Ala-gamma-D-Glu-L-Lys-D-Ala-D-Ala)](n+1)-di-trans,octa-cis-undecaprenyl diphosphate + di-trans,octa-cis-undecaprenyl diphosphate + H(+). It participates in cell wall biogenesis; peptidoglycan biosynthesis. Its function is as follows. Peptidoglycan polymerase that catalyzes glycan chain elongation from lipid-linked precursors. The protein is Biosynthetic peptidoglycan transglycosylase of Salmonella typhi.